Consider the following 488-residue polypeptide: GTPase Der (488 aa).

2 consecutive EngA-type G domains span residues 3 to 166 (PVVA…AEAM) and 199 to 372 (IKLA…DSAT). Residues 9 to 16 (GRPNVGKS), 56 to 60 (DTGGI), 118 to 121 (NKID), 205 to 212 (GKPNVGKS), 252 to 256 (DTAGV), and 317 to 320 (NKWD) contribute to the GTP site. The KH-like domain maps to 373-457 (RRVSTSMLTR…PIQLRFQEGD (85 aa)).

This sequence belongs to the TRAFAC class TrmE-Era-EngA-EngB-Septin-like GTPase superfamily. EngA (Der) GTPase family. Associates with the 50S ribosomal subunit.

GTPase that plays an essential role in the late steps of ribosome biogenesis. The protein is GTPase Der of Shewanella sp. (strain MR-7).